A 446-amino-acid chain; its full sequence is Coagulation factor VII (446 aa).

Residues 1–24 form the signal peptide; the sequence is MVPQTHGLLLLYFLLQLQGPLGAV. Residues 25–41 constitute a propeptide that is removed on maturation; that stretch reads VFITQEEAHGVLHRQRR. In terms of domain architecture, Gla spans 42–86; it reads ANSLLEELWSSSLERECNEERCSFEEAREIFKSPERTKQFWTIYS. Glutamate 47, glutamate 48, glutamate 55, glutamate 57, glutamate 60, glutamate 61, glutamate 66, glutamate 67, glutamate 70, and glutamate 76 each carry 4-carboxyglutamate. A disulfide bridge links cysteine 58 with cysteine 63. Residues 87 to 123 enclose the EGF-like 1; calcium-binding domain; that stretch reads DGDQCASNPCQNGGTCQDHLKSYVCFCPLDFEGRNCE. 10 disulfide bridges follow: cysteine 91–cysteine 102, cysteine 96–cysteine 111, cysteine 113–cysteine 122, cysteine 132–cysteine 143, cysteine 139–cysteine 153, cysteine 155–cysteine 168, cysteine 176–cysteine 303, cysteine 200–cysteine 205, cysteine 219–cysteine 235, and cysteine 351–cysteine 370. A glycan (O-linked (Glc...) serine; alternate) is linked at serine 93. A glycan (O-linked (Xyl...) serine; alternate) is linked at serine 93. An O-linked (Fuc) threonine glycan is attached at threonine 101. Aspartate 104 bears the (3R)-3-hydroxyaspartate mark. The EGF-like 2 domain maps to 128-169; the sequence is EQLICANENGDCDQYCRDHVGTKRTCSCHEDYVLQPDEVSCK. Asparagine 186 carries N-linked (GlcNAc...) asparagine glycosylation. The Peptidase S1 domain maps to 194–433; it reads IVGGYVCPKG…YIDWLVKYMD (240 aa). Histidine 234 (charge relay system) is an active-site residue. A glycan (N-linked (GlcNAc...) asparagine) is linked at asparagine 244. The active-site Charge relay system is the aspartate 283. Aspartate 379 serves as a coordination point for substrate. Cysteine 381 and cysteine 409 are oxidised to a cystine. The active-site Charge relay system is serine 385.

This sequence belongs to the peptidase S1 family. Heterodimer of a light chain and a heavy chain linked by a disulfide bond. The vitamin K-dependent, enzymatic carboxylation of some glutamate residues allows the modified protein to bind calcium. Post-translationally, the iron and 2-oxoglutarate dependent 3-hydroxylation of aspartate and asparagine is (R) stereospecific within EGF domains. In terms of processing, can be either O-glucosylated or O-xylosylated at Ser-93 by POGLUT1. As to expression, plasma.

It is found in the secreted. The catalysed reaction is Selective cleavage of Arg-|-Ile bond in factor X to form factor Xa.. Initiates the extrinsic pathway of blood coagulation. Serine protease that circulates in the blood in a zymogen form. Factor VII is converted to factor VIIa by factor Xa, factor XIIa, factor IXa, or thrombin by minor proteolysis. In the presence of tissue factor and calcium ions, factor VIIa then converts factor X to factor Xa by limited proteolysis. Factor VIIa also converts factor IX to factor IXa in the presence of tissue factor and calcium. In Rattus norvegicus (Rat), this protein is Coagulation factor VII (F7).